We begin with the raw amino-acid sequence, 488 residues long: NAD-reducing hydrogenase HoxS subunit beta (488 aa).

Cysteine 62, cysteine 65, cysteine 458, and cysteine 461 together coordinate Ni(2+).

It belongs to the [NiFe]/[NiFeSe] hydrogenase large subunit family. In terms of assembly, tetramer of an alpha and a gamma subunits (flavin-containing dimer), and a delta and a nickel-containing beta subunits (hydrogenase dimer). It depends on FMN as a cofactor. The cofactor is Ni(2+).

Its subcellular location is the cytoplasm. It catalyses the reaction H2 + NAD(+) = NADH + H(+). This chain is NAD-reducing hydrogenase HoxS subunit beta (hoxH), found in Cupriavidus necator (strain ATCC 17699 / DSM 428 / KCTC 22496 / NCIMB 10442 / H16 / Stanier 337) (Ralstonia eutropha).